Consider the following 81-residue polypeptide: Large ribosomal subunit protein bL31B (81 aa).

The protein belongs to the bacterial ribosomal protein bL31 family. Type B subfamily. In terms of assembly, part of the 50S ribosomal subunit.

The polypeptide is Large ribosomal subunit protein bL31B (Lactobacillus acidophilus (strain ATCC 700396 / NCK56 / N2 / NCFM)).